The following is a 488-amino-acid chain: Annexin A7 (488 aa).

A compositionally biased stretch (pro residues) spans 1–18 (MSYPGYPPTGYPPFPGYP). Disordered stretches follow at residues 1–49 (MSYP…YPQV) and 71–150 (GYPG…NTES). The repeat-rich region stretch occupies residues 1–143 (MSYPGYPPTG…QYPGGQPTYP (143 aa)). The 3 X 5 AA tandem repeats of G-Y-P-P-X stretch occupies residues 5–20 (GYPPTGYPPFPGYPPA). The span at 89-102 (PGQGFGVPPGGAGF) shows a compositional bias: gly residues. Annexin repeat units follow at residues 185 to 256 (FDAM…ALFM), 257 to 328 (PPTY…SMCQ), 340 to 412 (QMAQ…TILQ), and 416 to 487 (NRPA…AIVG). K233 is modified (N6-acetyllysine).

This sequence belongs to the annexin family. In terms of assembly, interacts with PDCD6.

In terms of biological role, calcium/phospholipid-binding protein which promotes membrane fusion and is involved in exocytosis. The sequence is that of Annexin A7 (ANXA7) from Macaca fascicularis (Crab-eating macaque).